A 300-amino-acid chain; its full sequence is Acetylglutamate kinase (300 aa).

Residues 68 to 69 (GG), Arg90, and Asn195 contribute to the substrate site.

Belongs to the acetylglutamate kinase family. ArgB subfamily.

It is found in the cytoplasm. It catalyses the reaction N-acetyl-L-glutamate + ATP = N-acetyl-L-glutamyl 5-phosphate + ADP. Its pathway is amino-acid biosynthesis; L-arginine biosynthesis; N(2)-acetyl-L-ornithine from L-glutamate: step 2/4. Functionally, catalyzes the ATP-dependent phosphorylation of N-acetyl-L-glutamate. The chain is Acetylglutamate kinase from Halorhodospira halophila (strain DSM 244 / SL1) (Ectothiorhodospira halophila (strain DSM 244 / SL1)).